The primary structure comprises 618 residues: Dihydroxy-acid dehydratase (618 aa).

Aspartate 81 is a Mg(2+) binding site. A [2Fe-2S] cluster-binding site is contributed by cysteine 122. Positions 123 and 124 each coordinate Mg(2+). At lysine 124 the chain carries N6-carboxylysine. Position 195 (cysteine 195) interacts with [2Fe-2S] cluster. Mg(2+) is bound at residue glutamate 491. Serine 517 serves as the catalytic Proton acceptor.

Belongs to the IlvD/Edd family. As to quaternary structure, homodimer. It depends on [2Fe-2S] cluster as a cofactor. Mg(2+) is required as a cofactor.

It catalyses the reaction (2R)-2,3-dihydroxy-3-methylbutanoate = 3-methyl-2-oxobutanoate + H2O. The enzyme catalyses (2R,3R)-2,3-dihydroxy-3-methylpentanoate = (S)-3-methyl-2-oxopentanoate + H2O. Its pathway is amino-acid biosynthesis; L-isoleucine biosynthesis; L-isoleucine from 2-oxobutanoate: step 3/4. The protein operates within amino-acid biosynthesis; L-valine biosynthesis; L-valine from pyruvate: step 3/4. In terms of biological role, functions in the biosynthesis of branched-chain amino acids. Catalyzes the dehydration of (2R,3R)-2,3-dihydroxy-3-methylpentanoate (2,3-dihydroxy-3-methylvalerate) into 2-oxo-3-methylpentanoate (2-oxo-3-methylvalerate) and of (2R)-2,3-dihydroxy-3-methylbutanoate (2,3-dihydroxyisovalerate) into 2-oxo-3-methylbutanoate (2-oxoisovalerate), the penultimate precursor to L-isoleucine and L-valine, respectively. This chain is Dihydroxy-acid dehydratase, found in Rhodopseudomonas palustris (strain ATCC BAA-98 / CGA009).